The primary structure comprises 183 residues: Translation initiation factor IF-3 (183 aa).

Belongs to the IF-3 family. Monomer.

The protein localises to the cytoplasm. Functionally, IF-3 binds to the 30S ribosomal subunit and shifts the equilibrium between 70S ribosomes and their 50S and 30S subunits in favor of the free subunits, thus enhancing the availability of 30S subunits on which protein synthesis initiation begins. The sequence is that of Translation initiation factor IF-3 from Aliivibrio salmonicida (strain LFI1238) (Vibrio salmonicida (strain LFI1238)).